A 512-amino-acid polypeptide reads, in one-letter code: Maturase K (512 aa).

This sequence belongs to the intron maturase 2 family. MatK subfamily.

The protein resides in the plastid. It is found in the chloroplast. Usually encoded in the trnK tRNA gene intron. Probably assists in splicing its own and other chloroplast group II introns. The chain is Maturase K from Acer platanoides (Norway maple).